The sequence spans 113 residues: Small ribosomal subunit protein bS6 (113 aa).

The protein belongs to the bacterial ribosomal protein bS6 family.

Functionally, binds together with bS18 to 16S ribosomal RNA. The sequence is that of Small ribosomal subunit protein bS6 (rpsF) from Buchnera aphidicola subsp. Acyrthosiphon pisum (strain APS) (Acyrthosiphon pisum symbiotic bacterium).